The sequence spans 587 residues: MEGESVKLSSQTLIQAGDDEKNQRTITVNPAHMGKAFKVMNELRSKQLLCDVMIVAEDVEIEAHRVVLAACSPYFCAMFTGDMSESKAKKIEIKDVDGQTLSKLIDYIYTAEIEVTEENVQVLLPAASLLQLMDVRQNCCDFLQSQLHPTNCLGIRAFADVHTCTDLLQQANAYAEQHFPEVMLGEEFLSLSLDQVCSLISSDKLTVSSEEKVFEAVISWINYEKETRLEHMAKLMEHVRLPLLPRDYLVQTVEEEALIKNNNTCKDFLIEAMKYHLLPLDQRLLIKNPRTKPRTPVSLPKVMIVVGGQAPKAIRSVECYDFEEDRWDQIAELPSRRCRAGVVFMAGHVYAVGGFNGSLRVRTVDVYDGVKDQWTSIASMQERRSTLGAAVLNDLLYAVGGFDGSTGLASVEAYSYKTNEWFFVAPMNTRRSSVGVGVVEGKLYAVGGYDGASRQCLSTVEQYNPATNEWIYVADMSTRRSGAGVGVLSGQLYATGGHDGPLVRKSVEVYDPGTNTWKQVADMNMCRRNAGVCAVNGLLYVVGGDDGSCNLASVEYYNPVTDKWTLLPTNMSTGRSYAGVAVIHKSL.

Serine 10 carries the post-translational modification Phosphoserine. In terms of domain architecture, BTB spans 50 to 117 (CDVMIVAEDV…IYTAEIEVTE (68 aa)). The BACK domain occupies 152–254 (CLGIRAFADV…PRDYLVQTVE (103 aa)). Residue threonine 295 is modified to Phosphothreonine. 6 Kelch repeats span residues 302 to 347 (VMIV…FMAG), 348 to 394 (HVYA…VLND), 396 to 441 (LYAV…VVEG), 442 to 490 (KLYA…VLSG), 491 to 537 (QLYA…AVNG), and 539 to 585 (LYVV…VIHK). Threonine 375 bears the Phosphothreonine mark. Residue serine 376 is modified to Phosphoserine. Serine 433 bears the Phosphoserine; by PKA and PKC mark.

This sequence belongs to the KLHL3 family. As to quaternary structure, homodimer. Component of the BCR(KLHL3) E3 ubiquitin ligase complex, at least composed of CUL3 and KLHL3 and RBX1. Interacts with CLDN8. Phosphorylation at Ser-433 by PKA or PKC decreases the interaction with WNK1 and WNK4, leading to inhibit their degradation by the BCR(KLHL3) complex. Phosphorylated at Ser-433 by PKC in response to angiotensin II signaling, decreasing ability to promote degradation of WNK1 and WNK4, leading to activation of Na-Cl cotransporter SLC12A3/NCC. Phosphorylation at Ser-433 is increased by insulin. Dephosphorylated at Ser-433 by calcineurin PPP3CA, promoting degradation of WNK1 and WNK4. In terms of tissue distribution, widely expressed.

The protein resides in the cytoplasm. Its subcellular location is the cytosol. The protein localises to the cytoskeleton. Its pathway is protein modification; protein ubiquitination. Substrate-specific adapter of a BCR (BTB-CUL3-RBX1) E3 ubiquitin ligase complex that acts as a regulator of ion transport in the distal nephron. The BCR(KLHL3) complex acts by mediating ubiquitination and degradation of WNK1 and WNK4, two activators of Na-Cl cotransporter SLC12A3/NCC in distal convoluted tubule cells of kidney, thereby regulating NaCl reabsorption. The BCR(KLHL3) complex also mediates ubiquitination and degradation of WNK3. The BCR(KLHL3) complex also mediates ubiquitination of CLDN8, a tight-junction protein required for paracellular chloride transport in the kidney, leading to its degradation. This is Kelch-like protein 3 from Homo sapiens (Human).